The following is a 97-amino-acid chain: Cobalt transport protein CbiN (97 aa).

Transmembrane regions (helical) follow at residues 6 to 26 (VLMILGVIILTLAPLIMYSGL) and 68 to 88 (SLLFALQAAIGAMIIGYFFGY).

Belongs to the CbiN family. In terms of assembly, forms an energy-coupling factor (ECF) transporter complex composed of an ATP-binding protein (A component, CbiO), a transmembrane protein (T component, CbiQ) and 2 possible substrate-capture proteins (S components, CbiM and CbiN) of unknown stoichimetry.

The protein resides in the cell membrane. It functions in the pathway cofactor biosynthesis; adenosylcobalamin biosynthesis. Its function is as follows. Part of the energy-coupling factor (ECF) transporter complex CbiMNOQ involved in cobalt import. This is Cobalt transport protein CbiN from Methanococcus maripaludis (strain C6 / ATCC BAA-1332).